A 522-amino-acid chain; its full sequence is Ribonuclease Y (522 aa).

A helical transmembrane segment spans residues 7–23 (SGSSAAVISGLVGFYIS). A KH domain is found at 212–278 (LTNLVHLNDD…TKTLELLIQD (67 aa)). The HD domain occupies 338 to 431 (ALSHTLEVAH…VCAADALSAA (94 aa)).

Belongs to the RNase Y family.

The protein resides in the cell membrane. In terms of biological role, endoribonuclease that initiates mRNA decay. The chain is Ribonuclease Y from Sulfurimonas denitrificans (strain ATCC 33889 / DSM 1251) (Thiomicrospira denitrificans (strain ATCC 33889 / DSM 1251)).